A 718-amino-acid polypeptide reads, in one-letter code: Acetolactate synthase, mitochondrial (718 aa).

Disordered regions lie at residues 1 to 50 (MLTR…APVY) and 72 to 101 (RKIQSSASTAAASPAVRPQPAQHFQAAPQP). Residues 32-45 (RYSNNIHTSSTQNA) show a composition bias toward polar residues. Positions 76–99 (SSASTAAASPAVRPQPAQHFQAAP) are enriched in low complexity. Residue Glu-173 participates in thiamine diphosphate binding. Arg-275 serves as a coordination point for FAD. Positions 296-327 (IPAKSAQPGHSPYLPSNPLNPSSQPSDPLPGD) are disordered. A compositionally biased stretch (low complexity) spans 306–325 (SPYLPSNPLNPSSQPSDPLP). FAD contacts are provided by residues 397-418 (HGSAYANFAMQEADVLIALGVR) and 449-468 (EIQPKNINKIVEAQIPVLGD). Residues 541–621 (QHQMWACQYY…VKVLLFNNEF (81 aa)) form a thiamine pyrophosphate binding region. Mg(2+)-binding residues include Asp-592 and Asn-619.

It belongs to the TPP enzyme family. Mg(2+) serves as cofactor. It depends on thiamine diphosphate as a cofactor.

It is found in the mitochondrion. The enzyme catalyses 2 pyruvate + H(+) = (2S)-2-acetolactate + CO2. It participates in amino-acid biosynthesis; L-isoleucine biosynthesis; L-isoleucine from 2-oxobutanoate: step 1/4. The protein operates within amino-acid biosynthesis; L-valine biosynthesis; L-valine from pyruvate: step 1/4. The polypeptide is Acetolactate synthase, mitochondrial (ILV2) (Cryptococcus neoformans var. neoformans serotype D (strain JEC21 / ATCC MYA-565) (Filobasidiella neoformans)).